The sequence spans 121 residues: Large ribosomal subunit protein uL18 (121 aa).

The protein belongs to the universal ribosomal protein uL18 family. Part of the 50S ribosomal subunit; part of the 5S rRNA/L5/L18/L25 subcomplex. Contacts the 5S and 23S rRNAs.

Its function is as follows. This is one of the proteins that bind and probably mediate the attachment of the 5S RNA into the large ribosomal subunit, where it forms part of the central protuberance. This is Large ribosomal subunit protein uL18 from Buchnera aphidicola subsp. Baizongia pistaciae (strain Bp).